A 125-amino-acid chain; its full sequence is Ribosome-binding factor A (125 aa).

This sequence belongs to the RbfA family. In terms of assembly, monomer. Binds 30S ribosomal subunits, but not 50S ribosomal subunits or 70S ribosomes.

It localises to the cytoplasm. One of several proteins that assist in the late maturation steps of the functional core of the 30S ribosomal subunit. Associates with free 30S ribosomal subunits (but not with 30S subunits that are part of 70S ribosomes or polysomes). Required for efficient processing of 16S rRNA. May interact with the 5'-terminal helix region of 16S rRNA. The protein is Ribosome-binding factor A of Acidovorax sp. (strain JS42).